The sequence spans 63 residues: Bowman-Birk type proteinase inhibitor B-II (63 aa).

Intrachain disulfides connect cysteine 5–cysteine 62, cysteine 6–cysteine 23, cysteine 9–cysteine 57, cysteine 11–cysteine 21, cysteine 30–cysteine 37, cysteine 34–cysteine 49, and cysteine 39–cysteine 47.

The protein belongs to the Bowman-Birk serine protease inhibitor family.

This Arachis hypogaea (Peanut) protein is Bowman-Birk type proteinase inhibitor B-II.